A 2220-amino-acid polypeptide reads, in one-letter code: Non-reducing polyketide synthase stbA (2220 aa).

The interval 10–255 is N-terminal acylcarrier protein transacylase domain (SAT); it reads IFSPQNSPPK…HDATNTDMAQ (246 aa). The Ketosynthase family 3 (KS3) domain occupies 379–803; sequence SDAIAVVGAG…GSNSALICSE (425 aa). Residues Cys-551, His-687, and His-726 each act as for beta-ketoacyl synthase activity in the active site. Residues 906 to 1207 form a malonyl-CoA:ACP transacylase (MAT) domain region; the sequence is LAFSGQSRTN…ADATQHTFQA (302 aa). The For acyl/malonyl transferase activity role is filled by Ser-993. The tract at residues 1287–1414 is N-terminal hotdog fold; it reads EPRAAQLVRY…GDFTMTAGPH (128 aa). The PKS/mFAS DH domain occupies 1287 to 1589; the sequence is EPRAAQLVRY…FHKTSMTKLL (303 aa). Residues 1292-1588 are product template (PT) domain; that stretch reads QLVRYKGALG…HFHKTSMTKL (297 aa). Catalysis depends on His-1323, which acts as the Proton acceptor; for dehydratase activity. A C-terminal hotdog fold region spans residues 1436-1589; the sequence is DAEKLRKRTA…FHKTSMTKLL (154 aa). Asp-1500 functions as the Proton donor; for dehydratase activity in the catalytic mechanism. Carrier domains are found at residues 1634 to 1711 and 1742 to 1821; these read AAGP…SGGA and PAGP…AADV. 2 positions are modified to O-(pantetheine 4'-phosphoryl)serine: Ser-1671 and Ser-1779. The segment at 1879-2210 is thioesterase (TE) domain; sequence TRFRMETVVY…YDFIFTELEN (332 aa). Catalysis depends on for thioesterase activity residues Ser-1999 and Asp-2148.

The catalysed reaction is 3 malonyl-CoA + acetyl-CoA + 2 H(+) = orsellinate + 3 CO2 + 4 CoA. Its pathway is secondary metabolite biosynthesis; terpenoid biosynthesis. Its function is as follows. Non-reducing polyketide synthase; part of the cluster that mediates the biosynthesis of LL-Z1272-beta, also known as ilicicolin B, a prenylated aryl-aldehyde produced by several fungi and that serves as a key pathway intermediate for many fungal meroterpenoids. The first step in the pathway is performed by the non-reducing polyketide synthase stbA that produces orsellinic acid by condensing acetyl-CoA with 3 malonyl-CoA units. The prenyltransferase stbC then prenylates orsenilic acid into grifolic acid. Finally, grifolic acid is reduced to ilicicolin B by the NRPS-like protein stbB. The chain is Non-reducing polyketide synthase stbA from Stachybotrys bisbyi (Hyalostachybotrys bisbyi).